A 152-amino-acid polypeptide reads, in one-letter code: UPF0756 membrane protein Helmi_09930 (152 aa).

A run of 5 helical transmembrane segments spans residues 6–26 (VLLI…TALA), 52–72 (TGLI…KVGL), 75–95 (VLLS…VLAT), 111–131 (IIVG…GIPV), and 132–152 (GPLM…WLSK).

The protein belongs to the UPF0756 family.

The protein resides in the cell membrane. In Heliobacterium modesticaldum (strain ATCC 51547 / Ice1), this protein is UPF0756 membrane protein Helmi_09930.